The following is a 112-amino-acid chain: Large ribosomal subunit protein bL20c (112 aa).

This sequence belongs to the bacterial ribosomal protein bL20 family.

The protein localises to the plastid. It is found in the chloroplast. Binds directly to 23S ribosomal RNA and is necessary for the in vitro assembly process of the 50S ribosomal subunit. It is not involved in the protein synthesizing functions of that subunit. This is Large ribosomal subunit protein bL20c (rpl20) from Chlamydomonas reinhardtii (Chlamydomonas smithii).